Consider the following 151-residue polypeptide: Urease accessory protein UreE (151 aa).

It belongs to the UreE family.

Its subcellular location is the cytoplasm. In terms of biological role, involved in urease metallocenter assembly. Binds nickel. Probably functions as a nickel donor during metallocenter assembly. The chain is Urease accessory protein UreE from Lachnoclostridium phytofermentans (strain ATCC 700394 / DSM 18823 / ISDg) (Clostridium phytofermentans).